Reading from the N-terminus, the 86-residue chain is U-actitoxin-Avd10a (86 aa).

The signal sequence occupies residues 1 to 20 (MSRIAILLFVAFLLVAGISA). The propeptide occupies 21-42 (KSTAHFKKNVLADLFKERRFNA). The region spanning 51–86 (CVNIDVDSFCDGMAERGACNIIPQMATNCAKACNSC) is the ShKT domain. 3 disulfide bridges follow: Cys-51–Cys-86, Cys-60–Cys-79, and Cys-69–Cys-83.

The protein belongs to the sea anemone type 1 potassium channel toxin family. Type 1b subfamily.

The protein resides in the secreted. The protein localises to the nematocyst. Inhibits voltage-gated potassium channels (Kv1/KCNA). This is U-actitoxin-Avd10a from Anemonia viridis (Snakelocks anemone).